Reading from the N-terminus, the 538-residue chain is Guanine nucleotide-binding protein-like 3 (538 aa).

A compositionally biased stretch (basic residues) spans 1-45 (MKRPKLKKASKRMTCHKRYKIQKKVREHHRKLRKEAKKRGHKKPK). A disordered region spans residues 1 to 125 (MKRPKLKKAS…KAKSGKQNPK (125 aa)). The tract at residues 2–46 (KRPKLKKASKRMTCHKRYKIQKKVREHHRKLRKEAKKRGHKKPKK) is basic. Residues 54–95 (APFKEALLREAELRKQQLEELKQQQKLDRQKEQERKRKLEIS) are a coiled coil. The segment covering 59–94 (ALLREAELRKQQLEELKQQQKLDRQKEQERKRKLEI) has biased composition (basic and acidic residues). N6-acetyllysine is present on lysine 79. Lysine 91 participates in a covalent cross-link: Glycyl lysine isopeptide (Lys-Gly) (interchain with G-Cter in SUMO2). Phosphoserine occurs at positions 95 and 101. Over residues 95–110 (SPDDEQSNVETQEESD) the composition is skewed to acidic residues. Basic residues predominate over residues 115 to 125 (KKAKSGKQNPK). Residues 129–307 (CQELKKVIEA…IIDSPCFIIS (179 aa)) enclose the CP-type G domain. 176–179 (NKSD) serves as a coordination point for GTP. Residues lysine 177, lysine 248, lysine 262, and lysine 270 each participate in a glycyl lysine isopeptide (Lys-Gly) (interchain with G-Cter in SUMO2) cross-link. 256-263 (GFPNVGKS) contributes to the GTP binding site. The segment at 277 to 451 (VGVSMGLTRS…HLTNKILFRS (175 aa)) is intermediate. 300–303 (DSPC) contributes to the GTP binding site. Basic and acidic residues-rich tracts occupy residues 460 to 473 (EEKD…KQTE) and 481 to 491 (QEHVTGEKNAE). The interval 460-532 (EEKDIPEESP…KMSEEDDAYD (73 aa)) is acidic. The tract at residues 460-538 (EEKDIPEESP…DAYDFTTDYI (79 aa)) is disordered. Phosphoserine occurs at positions 493, 505, and 518. Positions 514 to 524 (PSDRSFILDKM) are enriched in basic and acidic residues.

Belongs to the TRAFAC class YlqF/YawG GTPase family. As to quaternary structure, interacts with MDM2; this interaction stabilizes MDM2. Interaction with MDM2 occurs in the nucleoplasm and is triggered by a nucleolar release mechanism, such as mitosis-induced nucleolar disassembly. May interact with p53/TP53 via its basic domain. This interaction is most probably indirect and mediated by MDM2-binding. Expressed in testis.

It is found in the nucleus. Its subcellular location is the nucleolus. Its function is as follows. May be required to maintain the proliferative capacity of stem cells. Stabilizes MDM2 by preventing its ubiquitination, and hence proteasomal degradation. This chain is Guanine nucleotide-binding protein-like 3 (Gnl3), found in Rattus norvegicus (Rat).